The chain runs to 355 residues: Peptide chain release factor 1 (355 aa).

Gln232 carries the N5-methylglutamine modification.

The protein belongs to the prokaryotic/mitochondrial release factor family. Methylated by PrmC. Methylation increases the termination efficiency of RF1.

The protein resides in the cytoplasm. Functionally, peptide chain release factor 1 directs the termination of translation in response to the peptide chain termination codons UAG and UAA. In Thermobifida fusca (strain YX), this protein is Peptide chain release factor 1.